The sequence spans 92 residues: Alpha-conotoxin-like Mi20.2 (92 aa).

An N-terminal signal peptide occupies residues Met-1 to Glu-24. Residues Gln-25 to Arg-45 constitute a propeptide that is removed on maturation. Glu-49 carries the 4-carboxyglutamate modification. Position 55 is a 4-hydroxyproline (Pro-55). Disulfide bonds link Cys-63-Cys-72, Cys-68-Cys-80, Cys-73-Cys-90, and Cys-78-Cys-92.

The protein belongs to the conotoxin D superfamily. As to quaternary structure, hetero-, homo- or pseudo-homodimer (identical sequence, different post-translational modifications). In terms of tissue distribution, expressed by the venom duct.

It is found in the secreted. Its function is as follows. Alpha-conotoxins act on postsynaptic membranes, they bind to the nicotinic acetylcholine receptors (nAChR) and thus inhibit them. Through its two C-terminal domains, this homodimeric protein would bind to two nAChR allosteric sites, located outside the nAChR C-loop of the principal binding face and at the adjacent binding interface in a clockwise direction. This toxin specifically blocks mammalian neuronal nAChR of the alpha-7/CHRNA7, alpha-3-beta-2/CHRNA3-CHRNB2 and alpha-4-beta-2/CHRNA4-CHRNB2 subtypes. This Conus miles (Soldier cone) protein is Alpha-conotoxin-like Mi20.2.